The primary structure comprises 345 residues: NADPH-dependent oxidoreductase 2-alkenal reductase (345 aa).

Residues 52-53, 163-169, Gly188, Lys192, Tyr208, Asn232, Cys254, Tyr260, 284-286, Phe330, and 334-336 contribute to the NADP(+) site; these read PY, AASGAVG, FVV, and NVG. Tyr53 serves as a coordination point for substrate. Tyr260 serves as a coordination point for substrate.

The protein belongs to the NADP-dependent oxidoreductase L4BD family. Homodimer. Expressed in leaves.

The protein localises to the cytoplasm. The protein resides in the nucleus. Its subcellular location is the nucleoplasm. It catalyses the reaction an n-alkanal + NAD(+) = an alk-2-enal + NADH + H(+). It carries out the reaction an n-alkanal + NADP(+) = an alk-2-enal + NADPH + H(+). Inhibited by N-ethylmaleimide and p-chloromercuribenzoic acid. Involved in the detoxification of reactive carbonyls. Acts on lipid peroxide-derived reactive aldehydes. Specific to a double bond activated by an adjacent carbonyl group. Can use both quinones and diamide as substrates, but not menadione, ferricyanide or phylloquinone. Can use 4-hydroxy-(2E)-nonenal (HNE), 4-hydroxy-(2E)-hexenal (HHE), (2E)-nonenal, (2E)-hexenal, (2E)-pentenal, propenal (acrolein), 3-buten-2-one and 3-penten-2-one, but not (R)-(-)-carvone, n-nonanal, n-hexanal, (3Z)-hexanal, cyclohex-2-en-1-one or 12-oxo phytodienoic acid (OPDA) as electron acceptors. Catalyzes the reduction of the alpha,beta-unsaturated bond of 2-alkenals, of lipid peroxide-derived oxenes 9-oxo-10(E),12(Z)-octadecadienoic acid (9-KODE) and 13-oxo-9(Z),11(E)-octadecadienoic acid (13-KODE), as well as 4-oxo-(2E)-nonenal and 4-hydroxynonenal. Can use 12-oxo-10(E) dodecanoate (traumatin), trans-1,3 diphenyl-2-propenone, trans-1,4-diphenyl-2-butene-1,4-dione, 9-oxo-12,13-epoxy-(10E)-octadecenoic acid (trans-EKODE-1b) and 9,13-dihydroxy-10-oxo-11-octadecenoic acid as substrates. Catalyzes the reduction of the 7-8 double bond of phenylpropanal substrates, such as p-coumaryl aldehyde and coniferyl aldehyde (in vitro). Has activity towards toxic substrates, such as 4-hydroxy-(2E)-nonenal (in vitro). May play a distinct role in plant antioxidant defense and is possibly involved in NAD(P)/NAD(P)H homeostasis. The protein is NADPH-dependent oxidoreductase 2-alkenal reductase of Arabidopsis thaliana (Mouse-ear cress).